A 311-amino-acid polypeptide reads, in one-letter code: Phosphopantothenate--cysteine ligase (311 aa).

A2 carries the N-acetylalanine modification.

Belongs to the PPC synthetase family. In terms of assembly, homodimer.

The enzyme catalyses (R)-4'-phosphopantothenate + L-cysteine + ATP = N-[(R)-4-phosphopantothenoyl]-L-cysteine + AMP + diphosphate + H(+). The catalysed reaction is (R)-4'-phosphopantothenate + L-cysteine + CTP = N-[(R)-4-phosphopantothenoyl]-L-cysteine + CMP + diphosphate + H(+). The protein operates within cofactor biosynthesis; coenzyme A biosynthesis; CoA from (R)-pantothenate: step 2/5. Catalyzes the second step in the biosynthesis of coenzyme A from vitamin B5, where cysteine is conjugated to 4'-phosphopantothenate to form 4-phosphopantothenoylcysteine. Has a preference for ATP over CTP as a cosubstrate. This is Phosphopantothenate--cysteine ligase (PPCS) from Homo sapiens (Human).